The sequence spans 163 residues: Urease accessory protein UreE (163 aa).

The interval 134–163 (EAGAYGGGHRHHHDDDAPSIRQPARLRIHE) is disordered.

This sequence belongs to the UreE family.

The protein resides in the cytoplasm. Involved in urease metallocenter assembly. Binds nickel. Probably functions as a nickel donor during metallocenter assembly. This chain is Urease accessory protein UreE, found in Methylobacillus flagellatus (strain ATCC 51484 / DSM 6875 / VKM B-1610 / KT).